A 486-amino-acid chain; its full sequence is tRNA sulfurtransferase (486 aa).

Positions 63–167 (DAFAERLGCI…HEKLYMVVRR (105 aa)) constitute a THUMP domain. Residues 185 to 186 (LI), Lys-267, Gly-289, and Gln-298 each bind ATP. Cys-346 and Cys-460 are disulfide-bonded. Residues 408 to 486 (VDTQEVVIDI…GYTNVKVYRP (79 aa)) form the Rhodanese domain. Cys-460 functions as the Cysteine persulfide intermediate in the catalytic mechanism.

The protein belongs to the ThiI family.

It is found in the cytoplasm. It carries out the reaction [ThiI sulfur-carrier protein]-S-sulfanyl-L-cysteine + a uridine in tRNA + 2 reduced [2Fe-2S]-[ferredoxin] + ATP + H(+) = [ThiI sulfur-carrier protein]-L-cysteine + a 4-thiouridine in tRNA + 2 oxidized [2Fe-2S]-[ferredoxin] + AMP + diphosphate. The enzyme catalyses [ThiS sulfur-carrier protein]-C-terminal Gly-Gly-AMP + S-sulfanyl-L-cysteinyl-[cysteine desulfurase] + AH2 = [ThiS sulfur-carrier protein]-C-terminal-Gly-aminoethanethioate + L-cysteinyl-[cysteine desulfurase] + A + AMP + 2 H(+). It participates in cofactor biosynthesis; thiamine diphosphate biosynthesis. Catalyzes the ATP-dependent transfer of a sulfur to tRNA to produce 4-thiouridine in position 8 of tRNAs, which functions as a near-UV photosensor. Also catalyzes the transfer of sulfur to the sulfur carrier protein ThiS, forming ThiS-thiocarboxylate. This is a step in the synthesis of thiazole, in the thiamine biosynthesis pathway. The sulfur is donated as persulfide by IscS. This Shewanella denitrificans (strain OS217 / ATCC BAA-1090 / DSM 15013) protein is tRNA sulfurtransferase.